The chain runs to 776 residues: Rho guanine nucleotide exchange factor 6 (776 aa).

One can recognise a Calponin-homology (CH) domain in the interval 1–111; it reads MNPEEQIVTW…TLLAVNKATE (111 aa). The segment at 115-151 is disordered; the sequence is SERPCGRSSSLSAANTSQTNPQGAVSSTVSGLQRQSK. Polar residues predominate over residues 121–151; sequence RSSSLSAANTSQTNPQGAVSSTVSGLQRQSK. At Ser-126 the chain carries Phosphoserine. Thr-133 is subject to Phosphothreonine. 2 positions are modified to phosphoserine: Ser-144 and Ser-150. The SH3 domain occupies 160–219; it reads SHQLIVKARFNFKQTNEDELSVCKGDIIYVTRVEEGGWWEGTLNGRTGWFPSNYVREIKS. At Ser-225 the chain carries Phosphoserine. A DH domain is found at 241 to 421; sequence YYTVVLQNIL…KTLMGQCQDL (181 aa). In terms of domain architecture, PH spans 443–548; sequence DIKNLGNVIF…WLEQLNRLIR (106 aa). Ser-488 is modified (phosphoserine). The segment covering 561–572 has biased composition (low complexity); that stretch reads SSSCSAHSSFSS. The disordered stretch occupies residues 561-581; the sequence is SSSCSAHSSFSSTGQPRGPLE. Phosphoserine is present on residues Ser-640 and Ser-684.

Interacts with PAK kinases through the SH3 domain. Interacts with GIT1. Component of cytoplasmic complexes, which also contain PXN, GIT1 and PAK1. Interacts with PARVB. Interacts with BIN2. Identified in a complex with BIN2 and GIT2. Interacts with PARVG; the guanine nucleotide exchange factor activity of ARHGEF6 is essential for PARVG-induced enhancement of cell spreading. In terms of tissue distribution, ubiquitous.

The protein resides in the cell projection. The protein localises to the lamellipodium. Its function is as follows. Acts as a RAC1 guanine nucleotide exchange factor (GEF). This is Rho guanine nucleotide exchange factor 6 (ARHGEF6) from Homo sapiens (Human).